The sequence spans 1100 residues: Lysylphosphatidylglycerol biosynthesis bifunctional protein LysX (1100 aa).

The segment at 1-601 is phosphatidylglycerol lysyltransferase; that stretch reads MTPTSLARAR…LLHSDGTAPD (601 aa). The next 7 membrane-spanning stretches (helical) occupy residues 18–38, 60–80, 84–104, 112–132, 154–174, 206–226, and 314–332; these read VPAAAGWIVGVIATLSLLASV, FPDTSFAWAFVLALLAAALAA, IAWWILVGYMIAAAGWNIAGL, FAEVGEVIGLAFHLAAIAFLL, LVASMAVGTLIGWGLLELFPG, VFVNALLGLFGAVALMVTAIV, and AYGWAPGVMGASAAGAQAF. The interval 602–1100 is lysine--tRNA ligase; it reads GMGLQADLAD…TLPFPLAKPR (499 aa). The segment at residues 661-739 is a DNA-binding region (OB); the sequence is VAVAGRVLRS…SLLVSGWRLI (79 aa). Asp-1012 and Glu-1019 together coordinate Mg(2+).

This sequence in the N-terminal section; belongs to the LPG synthetase family. It in the C-terminal section; belongs to the class-II aminoacyl-tRNA synthetase family. Mg(2+) serves as cofactor.

The protein localises to the cell membrane. The catalysed reaction is tRNA(Lys) + L-lysine + ATP = L-lysyl-tRNA(Lys) + AMP + diphosphate. The enzyme catalyses L-lysyl-tRNA(Lys) + a 1,2-diacyl-sn-glycero-3-phospho-(1'-sn-glycerol) = a 1,2-diacyl-sn-glycero-3-phospho-1'-(3'-O-L-lysyl)-sn-glycerol + tRNA(Lys). Functionally, catalyzes the production of L-lysyl-tRNA(Lys)transfer and the transfer of a lysyl group from L-lysyl-tRNA(Lys) to membrane-bound phosphatidylglycerol (PG), which produces lysylphosphatidylglycerol (LPG), one of the components of the bacterial membrane with a positive net charge. LPG synthesis contributes to the resistance to cationic antimicrobial peptides (CAMPs) and likely protects M.tuberculosis against the CAMPs produced by competiting microorganisms (bacteriocins). In fact, the modification of anionic phosphatidylglycerol with positively charged L-lysine results in repulsion of the peptides. This is Lysylphosphatidylglycerol biosynthesis bifunctional protein LysX (lysX) from Mycolicibacterium vanbaalenii (strain DSM 7251 / JCM 13017 / BCRC 16820 / KCTC 9966 / NRRL B-24157 / PYR-1) (Mycobacterium vanbaalenii).